The primary structure comprises 345 residues: Anthranilate phosphoribosyltransferase (345 aa).

5-phospho-alpha-D-ribose 1-diphosphate contacts are provided by residues glycine 84, 87–88, threonine 92, 94–97, 112–120, and serine 124; these read GD, NIST, and KHGNRSVSS. Glycine 84 is a binding site for anthranilate. Serine 96 provides a ligand contact to Mg(2+). Asparagine 115 contributes to the anthranilate binding site. Arginine 170 serves as a coordination point for anthranilate. Mg(2+) is bound by residues aspartate 229 and glutamate 230.

This sequence belongs to the anthranilate phosphoribosyltransferase family. As to quaternary structure, homodimer. Mg(2+) serves as cofactor.

It carries out the reaction N-(5-phospho-beta-D-ribosyl)anthranilate + diphosphate = 5-phospho-alpha-D-ribose 1-diphosphate + anthranilate. Its pathway is amino-acid biosynthesis; L-tryptophan biosynthesis; L-tryptophan from chorismate: step 2/5. Functionally, catalyzes the transfer of the phosphoribosyl group of 5-phosphorylribose-1-pyrophosphate (PRPP) to anthranilate to yield N-(5'-phosphoribosyl)-anthranilate (PRA). This Xanthomonas campestris pv. campestris (strain B100) protein is Anthranilate phosphoribosyltransferase.